A 183-amino-acid polypeptide reads, in one-letter code: Large ribosomal subunit protein uL6 (183 aa).

Belongs to the universal ribosomal protein uL6 family. In terms of assembly, part of the 50S ribosomal subunit.

This protein binds to the 23S rRNA, and is important in its secondary structure. It is located near the subunit interface in the base of the L7/L12 stalk, and near the tRNA binding site of the peptidyltransferase center. This is Large ribosomal subunit protein uL6 from Chlamydia trachomatis serovar D (strain ATCC VR-885 / DSM 19411 / UW-3/Cx).